Here is a 1508-residue protein sequence, read N- to C-terminus: Pleiotropic ABC efflux transporter of multiple drugs CDR1 (1508 aa).

The segment at Met-1 to Glu-30 is disordered. Over Met-1–Ser-524 the chain is Cytoplasmic. Positions Asp-165–Gln-415 constitute an ABC transporter 1 domain. A helical membrane pass occupies residues Ile-525–Tyr-545. Residues Asn-546 to Ala-559 are Extracellular-facing. Residues Ala-560–Phe-580 form a helical membrane-spanning segment. Residues Glu-581 to Glu-608 lie on the Cytoplasmic side of the membrane. The helical transmembrane segment at Leu-609–Phe-629 threads the bilayer. Residues Arg-630 to Pro-633 are Extracellular-facing. The chain crosses the membrane as a helical span at residues Gly-634–Phe-654. At Arg-655–Ser-673 the chain is on the cytoplasmic side. Residues Val-674–Trp-694 traverse the membrane as a helical segment. Residues Cys-695–Asn-775 are Extracellular-facing. The chain crosses the membrane as a helical span at residues Leu-776–Phe-796. The Cytoplasmic portion of the chain corresponds to Asn-797 to Gly-1203. Residues Lys-839–Leu-860 form a disordered region. The span at Ala-845 to Leu-860 shows a compositional bias: basic and acidic residues. The ABC transporter 2 domain maps to Phe-867–Gly-1110. Gly-903–Thr-910 provides a ligand contact to ATP. A helical transmembrane segment spans residues Tyr-1204 to Phe-1224. Over His-1225–Ser-1239 the chain is Extracellular. The helical transmembrane segment at Met-1240 to Met-1260 threads the bilayer. Over Gln-1261–Glu-1288 the chain is Cytoplasmic. Residues Ile-1289–Leu-1309 form a helical membrane-spanning segment. Topologically, residues Tyr-1310–Met-1326 are extracellular. A helical membrane pass occupies residues Trp-1327–Phe-1347. Residues Met-1348 to Phe-1362 are Cytoplasmic-facing. The helical transmembrane segment at Ile-1363–Ile-1383 threads the bilayer. Residues Phe-1384–Asn-1475 are Extracellular-facing. The chain crosses the membrane as a helical span at residues Phe-1476–Leu-1496. Residues Ala-1497 to His-1508 are Cytoplasmic-facing.

Belongs to the ABC transporter superfamily.

The protein resides in the cell membrane. The enzyme catalyses fluconazole(in) + ATP + H2O = fluconazole(out) + ADP + phosphate + H(+). It catalyses the reaction itraconazole(in) + ATP + H2O = itraconazole(out) + ADP + phosphate + H(+). It carries out the reaction voriconazole(in) + ATP + H2O = voriconazole(out) + ADP + phosphate + H(+). The bis-benzodioxolylindolinone azoffluxin acts as an inhibitor of the transporter activity. Clorgyline analogs M19 and M25 inhibit the transcporter activity by uncoupling CDR1 ATPase activity from the active transport of substrates. Activity is also inhibited by beauvericin and oligomycin. Functionally, pleiotropic ABC efflux transporter that confers resistance to numerous chemicals including itraconazole, fluconazole, voriconazole and posaconazole. In Candidozyma auris (Yeast), this protein is Pleiotropic ABC efflux transporter of multiple drugs CDR1.